The chain runs to 300 residues: 4-hydroxy-tetrahydrodipicolinate synthase (300 aa).

Residue T46 participates in pyruvate binding. The active-site Proton donor/acceptor is the Y135. K163 (schiff-base intermediate with substrate) is an active-site residue. A pyruvate-binding site is contributed by V205.

The protein belongs to the DapA family. In terms of assembly, homotetramer; dimer of dimers.

The protein resides in the cytoplasm. It carries out the reaction L-aspartate 4-semialdehyde + pyruvate = (2S,4S)-4-hydroxy-2,3,4,5-tetrahydrodipicolinate + H2O + H(+). It participates in amino-acid biosynthesis; L-lysine biosynthesis via DAP pathway; (S)-tetrahydrodipicolinate from L-aspartate: step 3/4. Functionally, catalyzes the condensation of (S)-aspartate-beta-semialdehyde [(S)-ASA] and pyruvate to 4-hydroxy-tetrahydrodipicolinate (HTPA). The protein is 4-hydroxy-tetrahydrodipicolinate synthase of Koribacter versatilis (strain Ellin345).